The primary structure comprises 219 residues: Beta-crystallin B2 (219 aa).

Ala-2 is subject to N-acetylalanine. The N-terminal arm stretch occupies residues 2 to 16 (ASEHQMPASKQQPAS). Beta/gamma crystallin 'Greek key' domains lie at 17 to 56 (PNIA…LVHS) and 57 to 101 (GPWV…RPIK). The tract at residues 102-120 (VVRAPRQPLPTRQTKDSQE) is connecting peptide. Beta/gamma crystallin 'Greek key' domains follow at residues 121 to 162 (HKIV…RVQS) and 163 to 205 (GTWV…RRIR). Positions 207 to 219 (MQWHQRGAYHPSN) are C-terminal arm.

This sequence belongs to the beta/gamma-crystallin family. As to quaternary structure, homo/heterodimer, or complexes of higher-order. The structure of beta-crystallin oligomers seems to be stabilized through interactions between the N-terminal arms.

In terms of biological role, crystallins are the dominant structural components of the vertebrate eye lens. The chain is Beta-crystallin B2 (CRYBB2) from Gallus gallus (Chicken).